Reading from the N-terminus, the 498-residue chain is Osteoclast stimulatory transmembrane protein (498 aa).

Residues 1 to 51 (MRTIRAATEHLFGLGWKFWRLGICKAVVPLQAAWKAFSQPVPASCNELLTQ) lie on the Cytoplasmic side of the membrane. Residues 52–72 (LLLCVSLASLIAGLAHHWLVS) traverse the membrane as a helical segment. Over 73 to 81 (LQLYPLGPP) the chain is Extracellular. Residues 82–102 (ALVTSLCGLFVFLSLGLVPPI) traverse the membrane as a helical segment. Over 103–121 (RCLFVLSVPTLGSKQGRRL) the chain is Cytoplasmic. A helical membrane pass occupies residues 122-142 (LLSYSAANLAVAVVPNVLGNV). Residues 143–226 (RAAGQVLSCV…LARAALGTQR (84 aa)) lie on the Extracellular side of the membrane. Residues 227–247 (VVTGLFLLGLLGESAWYLHRY) form a helical membrane-spanning segment. The Cytoplasmic portion of the chain corresponds to 248 to 303 (LTDLRFDNIYATRQLVRQLAQAGATHLLTSPPPWLLQTAQPKLSREELLSCLLRLG). A helical transmembrane segment spans residues 304 to 324 (LLALLLVATAVTVASDYGAFL). Residues 325-401 (LAQAAVAWAQ…QAQPPRVTAA (77 aa)) lie on the Extracellular side of the membrane. The helical transmembrane segment at 402–422 (LAAGALQLLAGATLVLQAYAW) threads the bilayer. The Cytoplasmic portion of the chain corresponds to 423–498 (RLRHTIAASF…DSLGPPYDLE (76 aa)). Positions 449 to 498 (QRRHNQSDHLNKQPGTMATRESRKPGQGTRTLESQGPQAHDSLGPPYDLE) are disordered. The segment covering 476 to 485 (GTRTLESQGP) has biased composition (polar residues).

Expressed in osteoclast (at protein level). Ubiquitous. Highly expressed in multi-nuclear osteoclast cells compared to mono-nuclear macrophages. Expressed in foreign body giant cells (FBGCs).

It localises to the membrane. In terms of biological role, probable cell surface receptor that plays a role in cellular fusion and cell differentiation. Cooperates with DCSTAMP in modulating cell-cell fusion in both osteoclasts and foreign body giant cells (FBGCs). Involved in osteoclast bone resorption. Promotes osteoclast differentiation and may play a role in the multinucleated osteoclast maturation. The protein is Osteoclast stimulatory transmembrane protein (Ocstamp) of Mus musculus (Mouse).